The primary structure comprises 176 residues: RNA pyrophosphohydrolase (176 aa).

Residues 6–149 (GYRPNVGIVI…KRDVYRRVMK (144 aa)) enclose the Nudix hydrolase domain. Positions 38–59 (GGINPGESAEQAMYRELFEEVG) match the Nudix box motif.

Belongs to the Nudix hydrolase family. RppH subfamily. It depends on a divalent metal cation as a cofactor.

In terms of biological role, accelerates the degradation of transcripts by removing pyrophosphate from the 5'-end of triphosphorylated RNA, leading to a more labile monophosphorylated state that can stimulate subsequent ribonuclease cleavage. The sequence is that of RNA pyrophosphohydrolase from Shigella dysenteriae serotype 1 (strain Sd197).